Consider the following 457-residue polypeptide: Argininosuccinate lyase (457 aa).

Belongs to the lyase 1 family. Argininosuccinate lyase subfamily.

It localises to the cytoplasm. The enzyme catalyses 2-(N(omega)-L-arginino)succinate = fumarate + L-arginine. It participates in amino-acid biosynthesis; L-arginine biosynthesis; L-arginine from L-ornithine and carbamoyl phosphate: step 3/3. In Bacillus pumilus (strain SAFR-032), this protein is Argininosuccinate lyase.